The primary structure comprises 234 residues: uncharacterized protein (234 aa).

A disordered region spans residues 212-234 (GKHLKLDSNTTENKTTKQNETGG). A compositionally biased stretch (low complexity) spans 220–234 (NTTENKTTKQNETGG).

This is an uncharacterized protein from Methanothermobacter thermautotrophicus (Methanobacterium thermoformicicum).